A 410-amino-acid chain; its full sequence is Multifunctional CCA protein (410 aa).

ATP is bound by residues glycine 8 and arginine 11. Positions 8 and 11 each coordinate CTP. Residues glutamate 21 and aspartate 23 each coordinate Mg(2+). Residues arginine 91, arginine 137, and arginine 140 each contribute to the ATP site. Residues arginine 91, arginine 137, and arginine 140 each contribute to the CTP site. Residues 228–329 enclose the HD domain; sequence TGIHSLMTLR…VKLLEQVDAF (102 aa).

Belongs to the tRNA nucleotidyltransferase/poly(A) polymerase family. Bacterial CCA-adding enzyme type 1 subfamily. Monomer. Can also form homodimers and oligomers. Requires Mg(2+) as cofactor. Ni(2+) serves as cofactor.

The catalysed reaction is a tRNA precursor + 2 CTP + ATP = a tRNA with a 3' CCA end + 3 diphosphate. It catalyses the reaction a tRNA with a 3' CCA end + 2 CTP + ATP = a tRNA with a 3' CCACCA end + 3 diphosphate. Its function is as follows. Catalyzes the addition and repair of the essential 3'-terminal CCA sequence in tRNAs without using a nucleic acid template. Adds these three nucleotides in the order of C, C, and A to the tRNA nucleotide-73, using CTP and ATP as substrates and producing inorganic pyrophosphate. tRNA 3'-terminal CCA addition is required both for tRNA processing and repair. Also involved in tRNA surveillance by mediating tandem CCA addition to generate a CCACCA at the 3' terminus of unstable tRNAs. While stable tRNAs receive only 3'-terminal CCA, unstable tRNAs are marked with CCACCA and rapidly degraded. The sequence is that of Multifunctional CCA protein from Legionella pneumophila (strain Lens).